Consider the following 203-residue polypeptide: Undecaprenyl phosphate transporter A (203 aa).

The next 5 membrane-spanning stretches (helical) occupy residues 16-36, 48-68, 108-128, 137-157, and 173-193; these read AIFI…EIIL, LSIL…LLIL, YGVW…LITI, VVTF…GLIL, and LHTY…YFAI.

It belongs to the DedA family.

The protein resides in the cell membrane. In terms of biological role, flippase that catalyzes the transport of undecaprenyl phosphate (UndP) across the cytoplasmic membrane, from the external side to the cytoplasmic side. Is involved in UndP recycling during peptidoglycan synthesis. The chain is Undecaprenyl phosphate transporter A from Staphylococcus aureus (strain NCTC 8325 / PS 47).